A 543-amino-acid chain; its full sequence is Cyclohexanone 1,2-monooxygenase (543 aa).

The FAD site is built by Phe16, Asp37, Trp46, Asp57, Tyr63, and Val110.

It belongs to the FAD-binding monooxygenase family. FAD serves as cofactor.

The catalysed reaction is cyclohexanone + NADPH + O2 + H(+) = hexano-6-lactone + NADP(+) + H2O. The chain is Cyclohexanone 1,2-monooxygenase from Acinetobacter sp.